Here is a 73-residue protein sequence, read N- to C-terminus: Putative defensin-like protein 33 (73 aa).

The signal sequence occupies residues 1-25 (MASNKVSFIFILFLCVLSTAEFGEA). 3 disulfides stabilise this stretch: Cys33–Cys59, Cys45–Cys68, and Cys49–Cys70.

This sequence belongs to the DEFL family.

The protein localises to the secreted. This chain is Putative defensin-like protein 33, found in Arabidopsis thaliana (Mouse-ear cress).